Here is a 686-residue protein sequence, read N- to C-terminus: Probable metal-nicotianamine transporter YSL10 (686 aa).

The next 14 helical transmembrane spans lie at 36–56 (VTLR…VIVM), 60–80 (LTTG…FFLL), 109–129 (CVVA…IFAM), 151–171 (LGWM…SVVP), 212–232 (MLGK…FYTG), 271–291 (LVNI…WPLI), 316–336 (VFIS…KVMT), 383–403 (IPNW…IATV), 415–435 (VAVS…GCGL), 461–481 (GGII…STAS), 501–521 (FVSQ…VFWL), 556–576 (GSLP…AIAV), 597–617 (MAIP…GSLI), and 639–659 (GLIC…LAGV).

This sequence belongs to the YSL (TC 2.A.67.2) family.

Its subcellular location is the membrane. In terms of biological role, may be involved in the transport of nicotianamine-chelated metals. This is Probable metal-nicotianamine transporter YSL10 (YSL10) from Oryza sativa subsp. japonica (Rice).